The chain runs to 364 residues: Geranylfarnesyl diphosphate synthase, chloroplastic (364 aa).

A chloroplast-targeting transit peptide spans 1–51 (MSHCTIFLYKYFPGKPRYQHCSFLHPLNHKLKSLFLPITGSRFLSNSTFSV). Isopentenyl diphosphate contacts are provided by K72, K111, and H143. Mg(2+) is bound by residues D150 and D156. Dimethylallyl diphosphate is bound at residue R161. R162 provides a ligand contact to isopentenyl diphosphate. Dimethylallyl diphosphate is bound by residues K249, T250, Q287, D294, K304, and K314.

This sequence belongs to the FPP/GGPP synthase family. In terms of assembly, monomer. Requires Mg(2+) as cofactor. As to expression, strongly expressed in glandular trichomes, and, at low levels, in leaves, stems and flowers.

It localises to the plastid. The protein resides in the chloroplast. It catalyses the reaction isopentenyl diphosphate + (2E,6E,10E)-geranylgeranyl diphosphate = (2E,6E,10E,14E)-geranylfarnesyl diphosphate + diphosphate. The enzyme catalyses 2 isopentenyl diphosphate + (2E,6E)-farnesyl diphosphate = (2E,6E,10E,14E)-geranylfarnesyl diphosphate + 2 diphosphate. It carries out the reaction 3 isopentenyl diphosphate + (2E)-geranyl diphosphate = (2E,6E,10E,14E)-geranylfarnesyl diphosphate + 3 diphosphate. The catalysed reaction is 4 isopentenyl diphosphate + dimethylallyl diphosphate = (2E,6E,10E,14E)-geranylfarnesyl diphosphate + 4 diphosphate. It participates in secondary metabolite biosynthesis; terpenoid biosynthesis. Its pathway is isoprenoid biosynthesis. Involved in the biosynthesis of leucosceptrane sesterterpenoids natural products, which are playing defensive roles toward herbivorus insects (e.g. Spodoptera exigua). Catalyzes the condensation of isopentenyl pyrophosphate (IDP) with the allylic pyrophosphates to yield geranylfarnesyl diphosphate (GFDP), the C(25) prenyl diphosphate precursor to all sesterterpenoids. Geranylgeranyl diphosphate (GGPP) is the preferred substrate, however dimethylallyl diphosphate (DMADP), farnesyl diphosphate (FDP) and geranyl diphosphate (GDP) can also be used as allylic substrate. The chain is Geranylfarnesyl diphosphate synthase, chloroplastic from Leucosceptrum canum (Hairy white-wand).